We begin with the raw amino-acid sequence, 347 residues long: Protein RecA (347 aa).

67-74 (GPESSGKT) contributes to the ATP binding site.

It belongs to the RecA family.

It localises to the cytoplasm. Can catalyze the hydrolysis of ATP in the presence of single-stranded DNA, the ATP-dependent uptake of single-stranded DNA by duplex DNA, and the ATP-dependent hybridization of homologous single-stranded DNAs. It interacts with LexA causing its activation and leading to its autocatalytic cleavage. The sequence is that of Protein RecA from Sulfurovum sp. (strain NBC37-1).